The sequence spans 225 residues: Uracil-DNA glycosylase (225 aa).

Catalysis depends on Asp-65, which acts as the Proton acceptor.

The protein belongs to the uracil-DNA glycosylase (UDG) superfamily. UNG family.

Its subcellular location is the cytoplasm. The catalysed reaction is Hydrolyzes single-stranded DNA or mismatched double-stranded DNA and polynucleotides, releasing free uracil.. In terms of biological role, excises uracil residues from the DNA which can arise as a result of misincorporation of dUMP residues by DNA polymerase or due to deamination of cytosine. This chain is Uracil-DNA glycosylase, found in Anoxybacillus flavithermus (strain DSM 21510 / WK1).